We begin with the raw amino-acid sequence, 177 residues long: Putative fimbrin-like protein FimI (177 aa).

A signal peptide spans 1-19 (MIRKGAALVGLVLMSPVIA). Cys-40 and Cys-81 are oxidised to a cystine.

Belongs to the fimbrial protein family.

It localises to the fimbrium. The protein is Putative fimbrin-like protein FimI (fimI) of Salmonella typhi.